The following is a 94-amino-acid chain: Lipolysis-activating peptide 1-beta chain (94 aa).

A signal peptide spans 1 to 19; the sequence is MKILAVVLISVIVLNTANG. Positions 20–87 constitute an LCN-type CS-alpha/beta domain; that stretch reads ENYYPQKYTN…FFNALESQCP (68 aa). 3 disulfides stabilise this stretch: Cys-34–Cys-56, Cys-42–Cys-66, and Cys-46–Cys-68.

Belongs to the long (3 C-C) scorpion toxin superfamily. In terms of assembly, homodimer; disulfide-linked or monomer (edited version) or heterodimer of an alpha chain (AC D9U299 or AC D9U2A4) and this beta chain (non-edited version). In terms of tissue distribution, expressed by the venom gland.

Its subcellular location is the secreted. In terms of biological role, the homodimer inhibits HMG-CoA reductase (HMGCR) (32% of inhibition produced by 0.6 uM), a glycoprotein involved in the control of cholesterol biosynthesis. The inhibitory effects of bumarsin are seen at much lower concentrations (0.6 uM) than that for statins such as atorvastatin (5 mM) and simvastatin (10 uM). In addition to inhibition of HMG-CoA reductase, this protein lowers cholesterol levels by inducing steroid hormone synthesis via StAR, and by increasing reverse cholesterol transport mediated by the induction of ABCA1 and APOA1. Its function is as follows. The heterodimer non-edited LVP1 induces lipolysis in rat adipocytes. Induction of lipolysis by LVP1 appears to be mediated through the beta-2 adrenergic receptor pathway (ADRB2). Functionally, the monomer edited version, similar to alpha-toxins, may modulate voltage-gated sodium channels (Nav) and may block voltage-gated potassium channels (Kv). The sequence is that of Lipolysis-activating peptide 1-beta chain from Lychas mucronatus (Chinese swimming scorpion).